A 352-amino-acid chain; its full sequence is NADP-dependent isopropanol dehydrogenase (352 aa).

Zn(2+) is bound by residues cysteine 37, histidine 59, and aspartate 150. NADP(+) is bound by residues 175-178 (IGPV), 198-200 (GSR), tyrosine 218, 265-267 (VNY), and lysine 340.

Belongs to the zinc-containing alcohol dehydrogenase family. As to quaternary structure, homotetramer. Requires Zn(2+) as cofactor.

It carries out the reaction propan-2-ol + NADP(+) = acetone + NADPH + H(+). Alcohol dehydrogenase with a preference for medium chain secondary alcohols, such as 2-butanol and isopropanol. Has very low activity with primary alcohols, such as ethanol. Under physiological conditions, the enzyme reduces aldehydes and 2-ketones to produce secondary alcohols. Is also active with acetaldehyde and propionaldehyde. In Thermoanaerobacter brockii (Thermoanaerobium brockii), this protein is NADP-dependent isopropanol dehydrogenase (adh).